A 260-amino-acid chain; its full sequence is Diphthine synthase (260 aa).

Residues L9, D85, I88, 113–114 (TA), L168, A208, and H233 each bind S-adenosyl-L-methionine.

Belongs to the diphthine synthase family. As to quaternary structure, homodimer.

The catalysed reaction is 2-[(3S)-amino-3-carboxypropyl]-L-histidyl-[translation elongation factor 2] + 3 S-adenosyl-L-methionine = diphthine-[translation elongation factor 2] + 3 S-adenosyl-L-homocysteine + 3 H(+). It functions in the pathway protein modification; peptidyl-diphthamide biosynthesis. S-adenosyl-L-methionine-dependent methyltransferase that catalyzes the trimethylation of the amino group of the modified target histidine residue in translation elongation factor 2 (EF-2), to form an intermediate called diphthine. The three successive methylation reactions represent the second step of diphthamide biosynthesis. This is Diphthine synthase from Halobacterium salinarum (strain ATCC 29341 / DSM 671 / R1).